We begin with the raw amino-acid sequence, 245 residues long: MYPVDLHMHTVASTHAYSTLSDYIAQAKQKGIKLFAITDHGPDMEDAPHHWHFINMRIWPRVVDGVGILRGIEANIKNVDGEIDCSGKMFDSLDLIIAGFHEPVFAPHDKATNTQAMIATIASGNVHIISHPGNPKYEIDVKAVAEAAAKHQVALEINNSSFLHSRKGSEDNCRAVAAAVRDAGGWVALGSDSHAAFTMGEFEECLKILDAVDFPPERILNVSPRRLLNFLESRGMAPIAEFADL.

Zn(2+)-binding residues include His7, His9, His15, His40, Glu73, His101, His131, Asp192, and His194.

It belongs to the PHP family. Homotrimer. Zn(2+) serves as cofactor.

This Escherichia coli O139:H28 (strain E24377A / ETEC) protein is Probable phosphatase YcdX.